Here is a 203-residue protein sequence, read N- to C-terminus: uncharacterized protein (203 aa).

This is an uncharacterized protein from Pasteurella multocida (strain Pm70).